Consider the following 126-residue polypeptide: Small ribosomal subunit protein uS11 (126 aa).

The protein belongs to the universal ribosomal protein uS11 family. In terms of assembly, part of the 30S ribosomal subunit. Interacts with proteins S7 and S18. Binds to IF-3.

In terms of biological role, located on the platform of the 30S subunit, it bridges several disparate RNA helices of the 16S rRNA. Forms part of the Shine-Dalgarno cleft in the 70S ribosome. In Desulfotalea psychrophila (strain LSv54 / DSM 12343), this protein is Small ribosomal subunit protein uS11.